Here is a 97-residue protein sequence, read N- to C-terminus: DNA-directed RNA polymerase subunit omega (97 aa).

This sequence belongs to the RNA polymerase subunit omega family. As to quaternary structure, the RNAP catalytic core consists of 2 alpha, 1 beta, 1 beta' and 1 omega subunit. When a sigma factor is associated with the core the holoenzyme is formed, which can initiate transcription.

It catalyses the reaction RNA(n) + a ribonucleoside 5'-triphosphate = RNA(n+1) + diphosphate. Promotes RNA polymerase assembly. Latches the N- and C-terminal regions of the beta' subunit thereby facilitating its interaction with the beta and alpha subunits. The chain is DNA-directed RNA polymerase subunit omega from Coxiella burnetii (strain CbuK_Q154) (Coxiella burnetii (strain Q154)).